A 182-amino-acid chain; its full sequence is MEILLLAVALSMDCVALSMSNGAKCANYGIFRITKVSFVYGFFQGAMPIIGFFLGALFVGFIEQIDHFVAFAILGFLGVKMIFDSRENSDEITANLGLKELISGAVATSIDALAVGVTFSFTSLNIWFSCAIIAFVCFILSFAATFIGKKLGEIFKDKALILGGLILIFIGFKILITHLGIL.

5 consecutive transmembrane segments (helical) span residues I3 to A23, F42 to I62, I65 to S85, I126 to F146, and I161 to I181.

It belongs to the MntP (TC 9.B.29) family.

The protein localises to the cell inner membrane. Its function is as follows. Probably functions as a manganese efflux pump. This Campylobacter hominis (strain ATCC BAA-381 / DSM 21671 / CCUG 45161 / LMG 19568 / NCTC 13146 / CH001A) protein is Putative manganese efflux pump MntP.